We begin with the raw amino-acid sequence, 110 residues long: UPF0145 protein Blon_0093/BLIJ_0092 (110 aa).

Belongs to the UPF0145 family.

The chain is UPF0145 protein Blon_0093/BLIJ_0092 from Bifidobacterium longum subsp. infantis (strain ATCC 15697 / DSM 20088 / JCM 1222 / NCTC 11817 / S12).